The chain runs to 392 residues: Methylthioribose kinase (392 aa).

ATP-binding positions include Asn38, Lys53, and 107–109 (EDL). Asp225 provides a ligand contact to substrate. 242–244 (DPE) provides a ligand contact to ATP. Residue Arg332 participates in substrate binding.

Belongs to the methylthioribose kinase family. As to quaternary structure, homodimer.

It carries out the reaction 5-(methylsulfanyl)-D-ribose + ATP = 5-(methylsulfanyl)-alpha-D-ribose 1-phosphate + ADP + H(+). The protein operates within amino-acid biosynthesis; L-methionine biosynthesis via salvage pathway; S-methyl-5-thio-alpha-D-ribose 1-phosphate from S-methyl-5'-thioadenosine (hydrolase route): step 2/2. In terms of biological role, catalyzes the phosphorylation of methylthioribose into methylthioribose-1-phosphate. The chain is Methylthioribose kinase from Bacillus mycoides (strain KBAB4) (Bacillus weihenstephanensis).